A 368-amino-acid chain; its full sequence is uncharacterized protein (368 aa).

Residues 156-182 are compositionally biased toward low complexity; it reads SNVNAHNNNNNSNNNNNNNNNSNNNNN. Disordered regions lie at residues 156 to 213, 228 to 259, and 291 to 319; these read SNVN…SSPY, ASTN…INDL, and STTS…FSTA. Positions 183 to 194 are enriched in polar residues; it reads LYNQTQFSTRYF. 2 stretches are compositionally biased toward low complexity: residues 195–213 and 228–240; these read NSNS…SSPY and ASTN…SNNS. 2 stretches are compositionally biased toward polar residues: residues 241-254 and 297-311; these read MHTN…TSAD and IGTN…PSPS.

This is an uncharacterized protein from Saccharomyces cerevisiae (strain ATCC 204508 / S288c) (Baker's yeast).